A 90-amino-acid chain; its full sequence is Cell division topological specificity factor (90 aa).

The protein belongs to the MinE family.

Prevents the cell division inhibition by proteins MinC and MinD at internal division sites while permitting inhibition at polar sites. This ensures cell division at the proper site by restricting the formation of a division septum at the midpoint of the long axis of the cell. This chain is Cell division topological specificity factor, found in Brucella abortus (strain S19).